The sequence spans 238 residues: 7-cyano-7-deazaguanine synthase (238 aa).

Position 10–20 (10–20) interacts with ATP; it reads LSGGLDSSTVL. Zn(2+) is bound by residues Cys-190, Cys-198, Cys-201, and Cys-204.

It belongs to the QueC family. Zn(2+) is required as a cofactor.

The enzyme catalyses 7-carboxy-7-deazaguanine + NH4(+) + ATP = 7-cyano-7-deazaguanine + ADP + phosphate + H2O + H(+). It participates in purine metabolism; 7-cyano-7-deazaguanine biosynthesis. Catalyzes the ATP-dependent conversion of 7-carboxy-7-deazaguanine (CDG) to 7-cyano-7-deazaguanine (preQ(0)). The polypeptide is 7-cyano-7-deazaguanine synthase (Thermoplasma acidophilum (strain ATCC 25905 / DSM 1728 / JCM 9062 / NBRC 15155 / AMRC-C165)).